A 529-amino-acid polypeptide reads, in one-letter code: Glucose-6-phosphate isomerase (529 aa).

Glu322 serves as the catalytic Proton donor. Active-site residues include His351 and Lys455.

This sequence belongs to the GPI family.

Its subcellular location is the cytoplasm. The enzyme catalyses alpha-D-glucose 6-phosphate = beta-D-fructose 6-phosphate. It participates in carbohydrate biosynthesis; gluconeogenesis. The protein operates within carbohydrate degradation; glycolysis; D-glyceraldehyde 3-phosphate and glycerone phosphate from D-glucose: step 2/4. In terms of biological role, catalyzes the reversible isomerization of glucose-6-phosphate to fructose-6-phosphate. The sequence is that of Glucose-6-phosphate isomerase from Thermosynechococcus vestitus (strain NIES-2133 / IAM M-273 / BP-1).